A 418-amino-acid polypeptide reads, in one-letter code: MANKLRNYTINFGPQHPAAHGVLRMILELEGETIVRADPHIGLLHRGTEKLAETKTYLQALPYMDRLDYVSMMVNEQAYCLAVEKLAGIDVPIRAQYIRVMFAEVTRILNHLMGIGSHAFDIGAMTAILYAFRDREELMDLYEAVSGARMHAAYFRPGGVYRDLPDFMPKYESSKFRNAKVLKQLNESREGTMLDFIDAFCERFPKNIDTLETLLTDNRIWKQRTVGIGVVSPERAMQKGFTGVMLRGSGVEWDVRKTQPYEVYDKMDFDIPVGVNGDCYDRYLCRMEEMRQSVRIIKQCSEWLRVNPGPVITTNHKFAPPKRTEMKTGMEDLIHHFKLFTEGMHVPEGETYTAVEHPKGEFGVYIISDGANKPYRLKIRAPGFAHLQGMDEMAKGHMLADVVAIIGTQDIVFGEVDR.

This sequence belongs to the complex I 49 kDa subunit family. In terms of assembly, NDH-1 is composed of 14 different subunits. Subunits NuoB, C, D, E, F, and G constitute the peripheral sector of the complex.

It is found in the cell inner membrane. It carries out the reaction a quinone + NADH + 5 H(+)(in) = a quinol + NAD(+) + 4 H(+)(out). In terms of biological role, NDH-1 shuttles electrons from NADH, via FMN and iron-sulfur (Fe-S) centers, to quinones in the respiratory chain. The immediate electron acceptor for the enzyme in this species is believed to be ubiquinone. Couples the redox reaction to proton translocation (for every two electrons transferred, four hydrogen ions are translocated across the cytoplasmic membrane), and thus conserves the redox energy in a proton gradient. The polypeptide is NADH-quinone oxidoreductase subunit D (Neisseria meningitidis serogroup C / serotype 2a (strain ATCC 700532 / DSM 15464 / FAM18)).